We begin with the raw amino-acid sequence, 469 residues long: Tubulin gamma chain (469 aa).

Position 142 to 148 (142 to 148 (AGGTGSG)) interacts with GTP.

This sequence belongs to the tubulin family.

The protein resides in the cytoplasm. The protein localises to the cytoskeleton. It is found in the microtubule organizing center. Its subcellular location is the spindle pole body. Its function is as follows. Tubulin is the major constituent of microtubules. The gamma chain is found at microtubule organizing centers (MTOC) such as the spindle poles or the centrosome, suggesting that it is involved in the minus-end nucleation of microtubule assembly. The polypeptide is Tubulin gamma chain (TUB4) (Microbotryum violaceum (Anther smut fungus)).